We begin with the raw amino-acid sequence, 155 residues long: RNA pyrophosphohydrolase (155 aa).

Positions 5-147 (KYRPNVAAII…KRQVYRQVIA (143 aa)) constitute a Nudix hydrolase domain. The short motif at 42-63 (GGIDEGETPLEALHRELLEEIG) is the Nudix box element.

The protein belongs to the Nudix hydrolase family. RppH subfamily. The cofactor is a divalent metal cation.

Accelerates the degradation of transcripts by removing pyrophosphate from the 5'-end of triphosphorylated RNA, leading to a more labile monophosphorylated state that can stimulate subsequent ribonuclease cleavage. In Helicobacter pylori (strain ATCC 700392 / 26695) (Campylobacter pylori), this protein is RNA pyrophosphohydrolase.